A 957-amino-acid polypeptide reads, in one-letter code: Protein translocase subunit SecA (957 aa).

Residues Gln86, 104 to 108, and Asp494 each bind ATP; that span reads GEGKT. The segment covering 929–947 has biased composition (low complexity); sequence SRPAPAPTAAASPDPSSAS. The segment at 929-957 is disordered; the sequence is SRPAPAPTAAASPDPSSASGVVEADFTEE.

It belongs to the SecA family. As to quaternary structure, monomer and homodimer. Part of the essential Sec protein translocation apparatus which comprises SecA, SecYEG and auxiliary proteins SecDF. Other proteins may also be involved.

It is found in the cell inner membrane. Its subcellular location is the cellular thylakoid membrane. The protein resides in the cytoplasm. The catalysed reaction is ATP + H2O + cellular proteinSide 1 = ADP + phosphate + cellular proteinSide 2.. Functionally, part of the Sec protein translocase complex. Interacts with the SecYEG preprotein conducting channel. Has a central role in coupling the hydrolysis of ATP to the transfer of proteins into and across the cell membrane, serving as an ATP-driven molecular motor driving the stepwise translocation of polypeptide chains across the membrane. In terms of biological role, probably participates in protein translocation into and across both the cytoplasmic and thylakoid membranes in cyanobacterial cells. This Synechococcus sp. (strain JA-2-3B'a(2-13)) (Cyanobacteria bacterium Yellowstone B-Prime) protein is Protein translocase subunit SecA.